A 270-amino-acid chain; its full sequence is Replication protein A 32 kDa subunit (270 aa).

Position 1 is an N-acetylmethionine (methionine 1). Phosphoserine; by PRKDC is present on residues serine 4 and serine 8. The interval 20–41 is disordered; that stretch reads YTQSPGGFGSPTPSQAEKKSRV. The residue at position 21 (threonine 21) is a Phosphothreonine; by PRKDC. Serine 23 carries the phosphoserine; by CDK2 modification. Serine 29 bears the Phosphoserine; by CDK1 mark. Serine 33 is subject to Phosphoserine; by PRKDC. Glycyl lysine isopeptide (Lys-Gly) (interchain with G-Cter in ubiquitin) cross-links involve residues lysine 37 and lysine 38. Residues 74 to 148 constitute a DNA-binding region (OB); sequence VTIVGIIRHA…KSLVAFKIIP (75 aa). Residues 171-192 are disordered; sequence KPNSQASAGRPSMSNPGMSEPG. Positions 187-270 are interaction with RAD52, TIPIN, UNG and XPA; sequence GMSEPGNFSG…DDHFKSTDAE (84 aa).

This sequence belongs to the replication factor A protein 2 family. Component of the replication protein A complex (RPA/RP-A), a heterotrimeric complex composed of RPA1, RPA2 and RPA3. Interacts with PRPF19; the PRP19-CDC5L complex is recruited to the sites of DNA repair where it ubiquitinates the replication protein A complex (RPA). Interacts with SERTAD3. Interacts with TIPIN. Interacts with TIMELESS. Interacts with PPP4R2; the interaction is direct, DNA damage-dependent and mediates the recruitment of the PP4 catalytic subunit PPP4C. Interacts (hyperphosphorylated) with RAD51. Interacts with SMARCAL1; the interaction is direct and mediates the recruitment to the RPA complex of SMARCAL1. Interacts with RAD52 and XPA; those interactions are direct and associate RAD52 and XPA to the RPA complex. Interacts with FBH1. Interacts with ETAA1; the interaction is direct and promotes ETAA1 recruitment at stalled replication forks. Interacts with DDI2. Interacts (in unphosphorylated form via N-terminus) with EIF4EBP3; the interaction enhances EIF4EBP3-mediated inhibition of EIF4E-mediated mRNA nuclear export. Interacts with nuclear UNG (isoform 2); this interaction mediates UNG recruitment to RPA-coated single-stranded DNA at stalled replication forks. Post-translationally, differentially phosphorylated throughout the cell cycle, becoming phosphorylated at the G1-S transition and dephosphorylated in late mitosis. Mainly phosphorylated at Ser-23 and Ser-29, by cyclin A-CDK2 and cyclin B-CDK1, respectively during DNA replication and mitosis. Dephosphorylation may require the serine/threonine-protein phosphatase 4. Phosphorylation at Ser-23 and Ser-29 is a prerequisite for further phosphorylation. Becomes hyperphosphorylated on additional residues including Ser-4, Ser-8, Thr-21 and Ser-33 in response to DNA damage. Hyperphosphorylation is mediated by ATM, ATR and PRKDC. Primarily recruited to DNA repair nuclear foci as a hypophosphorylated form it undergoes subsequent hyperphosphorylation, catalyzed by ATR. Hyperphosphorylation is required for RAD51 recruitment to chromatin and efficient DNA repair. Phosphorylation at Thr-21 depends upon RFWD3 presence. DNA damage-induced 'Lys-63'-linked polyubiquitination by PRPF19 mediates ATRIP recruitment to the RPA complex at sites of DNA damage and activation of ATR. Ubiquitinated by RFWD3 at stalled replication forks in response to DNA damage: ubiquitination by RFWD3 does not lead to degradation by the proteasome and promotes removal of the RPA complex from stalled replication forks, promoting homologous recombination.

The protein resides in the nucleus. It localises to the PML body. As part of the heterotrimeric replication protein A complex (RPA/RP-A), binds and stabilizes single-stranded DNA intermediates, that form during DNA replication or upon DNA stress. It prevents their reannealing and in parallel, recruits and activates different proteins and complexes involved in DNA metabolism. Thereby, it plays an essential role both in DNA replication and the cellular response to DNA damage. In the cellular response to DNA damage, the RPA complex controls DNA repair and DNA damage checkpoint activation. Through recruitment of ATRIP activates the ATR kinase a master regulator of the DNA damage response. It is required for the recruitment of the DNA double-strand break repair factors RAD51 and RAD52 to chromatin in response to DNA damage. Also recruits to sites of DNA damage proteins like XPA and XPG that are involved in nucleotide excision repair and is required for this mechanism of DNA repair. Also plays a role in base excision repair (BER) probably through interaction with UNG. Also recruits SMARCAL1/HARP, which is involved in replication fork restart, to sites of DNA damage. May also play a role in telomere maintenance. The protein is Replication protein A 32 kDa subunit of Mus musculus (Mouse).